We begin with the raw amino-acid sequence, 362 residues long: Methylthioribose-1-phosphate isomerase (362 aa).

Residues 53–55, Arg90, and Gln201 each bind substrate; that span reads RGA. The active-site Proton donor is Asp241. Substrate is bound at residue 251–252; the sequence is NK.

This sequence belongs to the eIF-2B alpha/beta/delta subunits family. MtnA subfamily.

It catalyses the reaction 5-(methylsulfanyl)-alpha-D-ribose 1-phosphate = 5-(methylsulfanyl)-D-ribulose 1-phosphate. It participates in amino-acid biosynthesis; L-methionine biosynthesis via salvage pathway; L-methionine from S-methyl-5-thio-alpha-D-ribose 1-phosphate: step 1/6. Catalyzes the interconversion of methylthioribose-1-phosphate (MTR-1-P) into methylthioribulose-1-phosphate (MTRu-1-P). The sequence is that of Methylthioribose-1-phosphate isomerase from Dechloromonas aromatica (strain RCB).